The primary structure comprises 298 residues: Bifunctional protein FolD (298 aa).

NADP(+) is bound by residues 166–168, Ser195, and Ile236; that span reads GRS.

Belongs to the tetrahydrofolate dehydrogenase/cyclohydrolase family. In terms of assembly, homodimer.

The enzyme catalyses (6R)-5,10-methylene-5,6,7,8-tetrahydrofolate + NADP(+) = (6R)-5,10-methenyltetrahydrofolate + NADPH. It catalyses the reaction (6R)-5,10-methenyltetrahydrofolate + H2O = (6R)-10-formyltetrahydrofolate + H(+). Its pathway is one-carbon metabolism; tetrahydrofolate interconversion. In terms of biological role, catalyzes the oxidation of 5,10-methylenetetrahydrofolate to 5,10-methenyltetrahydrofolate and then the hydrolysis of 5,10-methenyltetrahydrofolate to 10-formyltetrahydrofolate. This Chlorobium phaeobacteroides (strain BS1) protein is Bifunctional protein FolD.